We begin with the raw amino-acid sequence, 514 residues long: Phospholipase C D (514 aa).

The tat-type signal signal peptide spans 1 to 37 (MSQSHIGGVSRREFLAKVAAGGAGALMSFAGPVIEKA). The disordered stretch occupies residues 492 to 514 (VPDPQIMPTQETTPTRGIPSGPC).

This sequence belongs to the bacterial phospholipase C family. Post-translationally, predicted to be exported by the Tat system. The position of the signal peptide cleavage has not been experimentally proven.

It is found in the secreted. It localises to the cell wall. The enzyme catalyses a 1,2-diacyl-sn-glycero-3-phosphocholine + H2O = phosphocholine + a 1,2-diacyl-sn-glycerol + H(+). In terms of biological role, involved in virulence. Induces cytotoxic effects on mouse macrophage cell lines, via direct or indirect enzymatic hydrolysis of cell membrane phospholipids. Hydrolyzes phosphatidylcholine. The polypeptide is Phospholipase C D (Mycobacterium tuberculosis (strain CDC 1551 / Oshkosh)).